The chain runs to 438 residues: Glutamyl-tRNA(Gln) amidotransferase subunit D (438 aa).

The region spanning 92 to 422 is the Asparaginase/glutaminase domain; it reads PTITILGTGG…REAKKMMLTN (331 aa). Active-site residues include threonine 102, threonine 178, aspartate 179, and lysine 256.

The protein belongs to the asparaginase 1 family. GatD subfamily. As to quaternary structure, heterodimer of GatD and GatE.

It carries out the reaction L-glutamyl-tRNA(Gln) + L-glutamine + ATP + H2O = L-glutaminyl-tRNA(Gln) + L-glutamate + ADP + phosphate + H(+). Its function is as follows. Allows the formation of correctly charged Gln-tRNA(Gln) through the transamidation of misacylated Glu-tRNA(Gln) in organisms which lack glutaminyl-tRNA synthetase. The reaction takes place in the presence of glutamine and ATP through an activated gamma-phospho-Glu-tRNA(Gln). The GatDE system is specific for glutamate and does not act on aspartate. This Pyrococcus furiosus (strain ATCC 43587 / DSM 3638 / JCM 8422 / Vc1) protein is Glutamyl-tRNA(Gln) amidotransferase subunit D.